The sequence spans 908 residues: 26S proteasome non-ATPase regulatory subunit 2 (908 aa).

Met1 is subject to N-acetylmethionine. The segment at 1 to 51 is disordered; sequence MEEGGRDKTPVQSQQPSATTPSGADEKSSGKERRDAGEKDKEQELSEEDKQ. 2 positions are modified to phosphothreonine: Thr9 and Thr20. The segment covering 10-22 has biased composition (polar residues); that stretch reads PVQSQQPSATTPS. Over residues 24-51 the composition is skewed to basic and acidic residues; it reads ADEKSSGKERRDAGEKDKEQELSEEDKQ. Residues Ser29 and Ser147 each carry the phosphoserine modification. Phosphotyrosine is present on Tyr194. Residues Ser361 and Ser363 each carry the phosphoserine modification. 5 PC repeats span residues 409 to 442, 443 to 479, 480 to 514, 517 to 551, and 560 to 589; these read SAAA…YIKS, GALL…TMRL, GSIF…SMEV, VTAL…TELK, and LGLG…PFRS. An N6-acetyllysine modification is found at Lys551. The span at 623 to 643 shows a compositional bias: basic and acidic residues; that stretch reads KEKEEDKDKKEKKDKDKKEAP. Positions 623–645 are disordered; the sequence is KEKEEDKDKKEKKDKDKKEAPAD. PC repeat units follow at residues 692-723 and 742-757; these read LALA…EVSY and AAML…KDPN. A required for interaction with UBLCP1 region spans residues 708–903; that stretch reads DTLSKFSHDA…LEGFVILRKN (196 aa).

The protein belongs to the proteasome subunit S2 family. In terms of assembly, component of the 19S proteasome regulatory particle complex. The 26S proteasome consists of a 20S core particle (CP) and two 19S regulatory subunits (RP). The regulatory particle is made of a lid composed of 9 subunits, a base containing 6 ATPases and few additional components including PSMD2. Interacts with RPGRIP1L. Interacts with CRY1 in a KDM8-dependent manner. Interacts (via C-terminus) with phosphatase UBLCP1 (via ubiquitin-like domain); the interaction recruits UBLCP1 to the 19S regulatory particle where it dephosphorylates 19S subunit PSMC2/RPT1 which impairs PSMC2 ATPase activity and disrupts 26S proteasome assembly.

Its function is as follows. Component of the 26S proteasome, a multiprotein complex involved in the ATP-dependent degradation of ubiquitinated proteins. This complex plays a key role in the maintenance of protein homeostasis by removing misfolded or damaged proteins, which could impair cellular functions, and by removing proteins whose functions are no longer required. Therefore, the proteasome participates in numerous cellular processes, including cell cycle progression, apoptosis, or DNA damage repair. Binds to the intracellular domain of tumor necrosis factor type 1 receptor. The binding domain of TRAP1 and TRAP2 resides outside the death domain of TNFR1. The sequence is that of 26S proteasome non-ATPase regulatory subunit 2 (Psmd2) from Mus musculus (Mouse).